A 164-amino-acid polypeptide reads, in one-letter code: uncharacterized protein (164 aa).

A signal peptide spans 1-25 (MMKTVKHLLCCAIAASALISTGVHA).

This is an uncharacterized protein from Escherichia coli (strain K12).